Consider the following 622-residue polypeptide: E3 ubiquitin-protein ligase RNF12-A (622 aa).

3 disordered regions span residues 1–26 (MESADSTGKGSIEQSESQRQSQMDRL), 67–386 (RLQQ…ESER), and 473–514 (NANA…NSRG). The span at 11–21 (SIEQSESQRQS) shows a compositional bias: low complexity. 2 stretches are compositionally biased toward polar residues: residues 110–138 (SVRQTGNTTRSGQRGNQSWRAVSRTNPNS) and 147–163 (INVNRTSGNPSMPSLDQ). Positions 216 to 242 (RSPDQRRTRARTDRSRSPLHHAVDPPI) are enriched in basic and acidic residues. The segment covering 247-256 (HSSSQTVDTS) has biased composition (polar residues). Residues 272–289 (SSQVQNSSSSNETEGSSR) show a composition bias toward low complexity. A compositionally biased stretch (polar residues) spans 300–317 (VLGTEGQSQSTVHLSNPE). Low complexity predominate over residues 318-331 (TRSSSQTPQTDSST). Positions 332-341 (NAETTGTGQR) are enriched in polar residues. Residues 355-365 (RPGDYRQRDSI) show a composition bias toward basic and acidic residues. Polar residues predominate over residues 366 to 382 (ANRTRSRSQTPNNTVTY). The segment at 568–609 (CSVCITEYTEGNKLRKLPCSHEYHIHCIDRWLSENSTCPICR) adopts an RING-type; atypical zinc-finger fold. A PDZ-binding motif is present at residues 619–622 (ESIV).

Belongs to the RNF12 family. As to quaternary structure, forms homodimers through the C-terminal region. The N-terminus interacts with the homeobox of LIM/homeobox factor lhx1/lim1, with lhx3/lim3 and lhx5/lim5, and with the N-terminus of ldb1. As to expression, shows overlapping expression with lhx1/lim1 and ldb1 in the gastrula mesoderm, and expression overlaps with ldb1 throughout early embryogenesis. After gastrulation, expression is gradually restricted to tissues originated from the ectoderm, the neuroectoderm, neural crest and epidermis, and subsequently to the neural tube as well as the head and tailbud region.

The protein localises to the nucleus. The enzyme catalyses S-ubiquitinyl-[E2 ubiquitin-conjugating enzyme]-L-cysteine + [acceptor protein]-L-lysine = [E2 ubiquitin-conjugating enzyme]-L-cysteine + N(6)-ubiquitinyl-[acceptor protein]-L-lysine.. It functions in the pathway protein modification; protein ubiquitination. Functionally, acts as an E3 ubiquitin-protein ligase specific for ldb1, mediating ubiquitination and proteasome-dependent degradation of excess ldb1 in a RING-dependent manner. Does not degrade ldb1 bound to lhx1/lim1, nor lim1 itself and thus contributes to the establishment of proper ldb1-lhx1/lim1 stoichiometry and the formation of a ldb1-lhx1/lim1 complex. Interferes with Spemann organizer function and suppresses secondary axis formation induced by ldb1 and lhx1/lim1. In Xenopus laevis (African clawed frog), this protein is E3 ubiquitin-protein ligase RNF12-A (rnf12-a).